The chain runs to 101 residues: Transcription factor ILI2 (101 aa).

The interval 1–22 is disordered; sequence MSSSRRSRTSSRLAAAPPPTDE. A bHLH domain is found at 8–63; the sequence is RTSSRLAAAPPPTDEQMAELISKLQAVLPTRGGEANAKQASSAEVLQEACRYIRRL.

Belongs to the bHLH protein family.

In terms of biological role, atypical and probable non DNA-binding bHLH transcription factor that integrates multiple signaling pathways to regulate cell elongation and plant development. The polypeptide is Transcription factor ILI2 (ILI2) (Oryza sativa subsp. indica (Rice)).